Consider the following 984-residue polypeptide: Probable beta-galactosidase C (984 aa).

Residues 1–19 (MRLLNIFTTLCLLLWSGAA) form the signal peptide. Positions 78, 123, 124, 125, and 183 each coordinate substrate. E184 (proton donor) is an active-site residue. Y247 serves as a coordination point for substrate. A disulfide bridge connects residues C253 and C300. N272 is a glycosylation site (N-linked (GlcNAc...) asparagine). The Nucleophile role is filled by E283. Y349 serves as a coordination point for substrate. N387, N433, N462, N516, N583, N599, N673, N716, N756, N860, and N870 each carry an N-linked (GlcNAc...) asparagine glycan.

This sequence belongs to the glycosyl hydrolase 35 family.

The protein resides in the secreted. It catalyses the reaction Hydrolysis of terminal non-reducing beta-D-galactose residues in beta-D-galactosides.. In terms of biological role, cleaves beta-linked terminal galactosyl residues from gangliosides, glycoproteins, and glycosaminoglycans. The polypeptide is Probable beta-galactosidase C (lacC) (Sclerotinia sclerotiorum (strain ATCC 18683 / 1980 / Ss-1) (White mold)).